The sequence spans 209 residues: Outer-membrane lipoprotein carrier protein (209 aa).

Residues 1–21 (MHRQLRYAVLATALFASTAFA) form the signal peptide.

The protein belongs to the LolA family. In terms of assembly, monomer.

The protein resides in the periplasm. Its function is as follows. Participates in the translocation of lipoproteins from the inner membrane to the outer membrane. Only forms a complex with a lipoprotein if the residue after the N-terminal Cys is not an aspartate (The Asp acts as a targeting signal to indicate that the lipoprotein should stay in the inner membrane). This is Outer-membrane lipoprotein carrier protein from Xanthomonas campestris pv. campestris (strain 8004).